The primary structure comprises 380 residues: Cytochrome b (380 aa).

The next 4 membrane-spanning stretches (helical) occupy residues 34-54, 78-99, 114-134, and 179-199; these read FGSL…FLAM, WLIR…YLHI, WNIG…GYVL, and FFTF…IHLL. Heme b contacts are provided by histidine 84 and histidine 98. Histidine 183 and histidine 197 together coordinate heme b. Histidine 202 serves as a coordination point for a ubiquinone. A run of 4 helical transmembrane segments spans residues 227–247, 289–309, 321–341, and 348–368; these read YKDL…ALFT, LGGV…PILH, ITQI…WIGG, and FITI…ILFP.

The protein belongs to the cytochrome b family. The cytochrome bc1 complex contains 3 respiratory subunits (MT-CYB, CYC1 and UQCRFS1), 2 core proteins (UQCRC1 and UQCRC2) and probably 6 low-molecular weight proteins. Requires heme b as cofactor.

It localises to the mitochondrion inner membrane. In terms of biological role, component of the ubiquinol-cytochrome c reductase complex (complex III or cytochrome b-c1 complex) that is part of the mitochondrial respiratory chain. The b-c1 complex mediates electron transfer from ubiquinol to cytochrome c. Contributes to the generation of a proton gradient across the mitochondrial membrane that is then used for ATP synthesis. The protein is Cytochrome b (mt-cyb) of Hemitrygon laosensis (Mekong freshwater stingray).